Reading from the N-terminus, the 389-residue chain is Alanine racemase (389 aa).

Residue Lys48 is the Proton acceptor; specific for D-alanine of the active site. Lys48 carries the N6-(pyridoxal phosphate)lysine modification. Substrate is bound at residue Arg144. The Proton acceptor; specific for L-alanine role is filled by Tyr281. Met329 contacts substrate.

It belongs to the alanine racemase family. Pyridoxal 5'-phosphate is required as a cofactor.

The enzyme catalyses L-alanine = D-alanine. The protein operates within amino-acid biosynthesis; D-alanine biosynthesis; D-alanine from L-alanine: step 1/1. Catalyzes the interconversion of L-alanine and D-alanine. May also act on other amino acids. The protein is Alanine racemase (alr) of Leptospira interrogans serogroup Icterohaemorrhagiae serovar copenhageni (strain Fiocruz L1-130).